The chain runs to 388 residues: GTPase Obg (388 aa).

In terms of domain architecture, Obg spans 1–159 (MKFVDEANIR…RSIKLELLLL (159 aa)). Positions 160 to 333 (ADVGLLGMPN…LSIKMLDYIR (174 aa)) constitute an OBG-type G domain. Residues 166-173 (GMPNAGKS), 191-195 (FTTLV), 213-216 (DIPG), 283-286 (NKTD), and 314-316 (SAY) each bind GTP. Ser173 and Thr193 together coordinate Mg(2+).

This sequence belongs to the TRAFAC class OBG-HflX-like GTPase superfamily. OBG GTPase family. As to quaternary structure, monomer. Mg(2+) serves as cofactor.

Its subcellular location is the cytoplasm. In terms of biological role, an essential GTPase which binds GTP, GDP and possibly (p)ppGpp with moderate affinity, with high nucleotide exchange rates and a fairly low GTP hydrolysis rate. Plays a role in control of the cell cycle, stress response, ribosome biogenesis and in those bacteria that undergo differentiation, in morphogenesis control. The polypeptide is GTPase Obg (Shewanella frigidimarina (strain NCIMB 400)).